The sequence spans 442 residues: Chromosomal replication initiator protein DnaA (442 aa).

Residues 1 to 75 (MDAWPRCLER…GNGEVALAVG (75 aa)) are domain I, interacts with DnaA modulators. Residues 75–104 (GSRPRAPEPAPAAAAVPSAPQAAPMVPFAG) form a domain II region. Residues 105-322 (NLDSHYTFAN…GALNTLVARA (218 aa)) are domain III, AAA+ region. Positions 150, 152, 153, and 154 each coordinate ATP. The interval 323 to 442 (NFTGRSITVE…WEKLIRKLSE (120 aa)) is domain IV, binds dsDNA.

The protein belongs to the DnaA family. In terms of assembly, oligomerizes as a right-handed, spiral filament on DNA at oriC.

The protein localises to the cytoplasm. Plays an essential role in the initiation and regulation of chromosomal replication. ATP-DnaA binds to the origin of replication (oriC) to initiate formation of the DNA replication initiation complex once per cell cycle. Binds the DnaA box (a 9 base pair repeat at the origin) and separates the double-stranded (ds)DNA. Forms a right-handed helical filament on oriC DNA; dsDNA binds to the exterior of the filament while single-stranded (ss)DNA is stabiized in the filament's interior. The ATP-DnaA-oriC complex binds and stabilizes one strand of the AT-rich DNA unwinding element (DUE), permitting loading of DNA polymerase. After initiation quickly degrades to an ADP-DnaA complex that is not apt for DNA replication. Binds acidic phospholipids. This is Chromosomal replication initiator protein DnaA from Xanthomonas euvesicatoria pv. vesicatoria (strain 85-10) (Xanthomonas campestris pv. vesicatoria).